The following is a 220-amino-acid chain: Nucleolar protein 12 (220 aa).

The stretch at 31-86 (HKRKMQRRKTAVEEIKRKIKEEQKKMKEERHKEYMKMLKEREEALCELEENDELEE) forms a coiled coil. The interval 109–220 (ISDLDLSGIR…QTGKTRRRRN (112 aa)) is disordered. Residues 139–148 (EKGADEEKPK) are compositionally biased toward basic and acidic residues. 2 stretches are compositionally biased toward basic residues: residues 176 to 186 (RSQRKSGKRPS) and 205 to 220 (KTQR…RRRN).

The protein belongs to the RRP17 family.

It is found in the nucleus. Its subcellular location is the nucleolus. Its function is as follows. May bind to rRNA. This is Nucleolar protein 12 (nol12) from Xenopus laevis (African clawed frog).